The primary structure comprises 542 residues: 4-coumarate--CoA ligase 2 (542 aa).

The ATP site is built by S189, S190, G191, T192, T193, and K197. Y239 and S243 together coordinate (E)-4-coumaroyl-AMP. Y239 and S243 together coordinate (E)-caffeoyl-AMP. (E)-feruloyl-AMP contacts are provided by Y239 and S243. Position 260 (K260) interacts with CoA. The SBD1 stretch occupies residues 262–331 (DIVSFLELIQ…AKFPNAKLGQ (70 aa)). A (E)-4-coumaroyl-AMP-binding site is contributed by A309. A309 serves as a coordination point for (E)-caffeoyl-AMP. Position 309 (A309) interacts with (E)-feruloyl-AMP. Positions 331, 332, and 336 each coordinate ATP. The (E)-4-coumaroyl-AMP site is built by G332, T336, M344, D420, R435, K437, and K441. Residues G332, T336, M344, D420, R435, K437, and K441 each coordinate (E)-caffeoyl-AMP. 7 residues coordinate (E)-feruloyl-AMP: G332, T336, M344, D420, R435, K437, and K441. AMP contacts are provided by G332 and T336. The segment at 332–399 (GYGMTEAGPV…IRGDQIMKGY (68 aa)) is SBD2. Residues D420 and R435 each contribute to the ATP site. D420 contributes to the AMP binding site. 2 residues coordinate AMP: K437 and K441. 2 residues coordinate CoA: K443 and G444. AMP is bound at residue Q446. K526 serves as a coordination point for ATP.

The protein belongs to the ATP-dependent AMP-binding enzyme family. Mg(2+) is required as a cofactor. In terms of tissue distribution, mainly expressed in old stems and, to a lower extent, in flowers (e.g. in ovary), leaves, young stems, shoot tips and patel limbs.

The catalysed reaction is (E)-4-coumarate + ATP + CoA = (E)-4-coumaroyl-CoA + AMP + diphosphate. It catalyses the reaction (E)-caffeate + ATP + CoA = (E)-caffeoyl-CoA + AMP + diphosphate. The enzyme catalyses (E)-ferulate + ATP + CoA = (E)-feruloyl-CoA + AMP + diphosphate. It carries out the reaction (E)-cinnamate + ATP + CoA = (E)-cinnamoyl-CoA + AMP + diphosphate. The catalysed reaction is (E)-4-coumarate + ATP + H(+) = (E)-4-coumaroyl-AMP + diphosphate. It catalyses the reaction (E)-4-coumaroyl-AMP + CoA = (E)-4-coumaroyl-CoA + AMP + H(+). The enzyme catalyses (E)-caffeate + ATP + H(+) = (E)-caffeoyl-AMP + diphosphate. It carries out the reaction (E)-caffeoyl-AMP + CoA = (E)-caffeoyl-CoA + AMP + H(+). The catalysed reaction is (E)-ferulate + ATP + H(+) = (E)-feruloyl-AMP + diphosphate. It catalyses the reaction (E)-feruloyl-AMP + CoA = (E)-feruloyl-CoA + AMP + H(+). It functions in the pathway phytoalexin biosynthesis; 3,4',5-trihydroxystilbene biosynthesis; 3,4',5-trihydroxystilbene from trans-4-coumarate: step 1/2. In terms of biological role, major enzyme of the phenylpropanoid pathway that mediates the production of several precursors for numerous metabolites and regulates carbon flow. Catalyzes the formation of CoA thioesters using 4-coumarate, ferulate, caffeate, and cinnamate as substrates. Follows a two-step reaction mechanism, wherein a (hydroxy)cinnamate substrate first undergoes adenylation by ATP leading to an acyl-AMP, followed by a thioesterification in the presence of CoA to yield the final (hydroxy)cinnamoyl-CoA product. Almost inactive toward sinapate. This is 4-coumarate--CoA ligase 2 from Nicotiana tabacum (Common tobacco).